Here is a 189-residue protein sequence, read N- to C-terminus: Phomopsin biosynthesis cluster protein D (189 aa).

The protein belongs to the oryJ family.

Part of the gene cluster that mediates the biosynthesis of the phomopsins, a group of hexapeptide mycotoxins which infects lupins and causes lupinosis disease in livestock. The role of phomC within the phomopsins biosynthesis pathway has still to be determined. The pathway starts with the processing of the precursor phomA by several endopeptidases including kexin proteases as well as the cluster-specific S41 family peptidase phomP1 and the oligopeptidase phomG to produce 10 identical copies of the hexapeptide Tyr-Val-Ile-Pro-Ile-Asp. After being excised from the precursor peptide, the core peptides are cyclized and modified post-translationally by enzymes encoded within the gene cluster. The timing and order of proteolysis of the phomA precursor and PTMs are still unknown. Two tyrosinase-like enzymes, phomQ1 and phomQ2, catalyze the chlorination and hydroxylation of Tyr, respectively. PhomYb, is proposed to be involved in the construction of the macrocyclic structure. The other 4 ustYa family proteins may be involved in PTMs that generate the unique structure of phomopsin A. PhomYa is required for the hydroxylation of C-beta of Tyr. PhomYc, phomYd, and phomYe are responsible for the biosynthesis of 2,3-dehydroisoleucine (dIle), 2,3-dehydroaspartic acid (dAsp), and 3,4-dehydroproline (dPro), respectively. While dIle formation by phomYc is indispensable for the installation of dAsp by phomYd, the order of the other PTMs have not been elucidated yet. Most of the biosynthetic enzymes likely have broad substrate specificity, and thus, there might be a metabolic grid from a precursor to phomopsin A. The enzyme(s) responsible for the biosynthesis of 3,4-dehydrovaline (dVal) have also not been identified yet. Finally, phomM acts as an S-adenosylmethionine-dependent alpha-N-methyltransferase that catalyzes two successive N-methylation reactions, converting N-desmethyl-phomopsin A to phomopsin A and phomopsin A further to an N,N-dimethylated congener called phomopsin E. This is Phomopsin biosynthesis cluster protein D from Diaporthe leptostromiformis (Lupinosis disease fungus).